The following is a 409-amino-acid chain: Glycosaminoglycan xylosylkinase (409 aa).

Residues 1–6 lie on the Cytoplasmic side of the membrane; it reads MKLKQR. Residues 7–25 traverse the membrane as a helical; Signal-anchor for type II membrane protein segment; it reads VVLLAILLVIFIFTKVFLI. Residues 26 to 409 lie on the Lumenal side of the membrane; it reads DNLDTSAANR…VEDRMPLSHL (384 aa). ATP is bound by residues Q107 and K123. D142 contacts Mn(2+). N193 carries N-linked (GlcNAc...) asparagine glycosylation. 2 disulfides stabilise this stretch: C196-C211 and C201-C204. Residue 222–225 participates in ATP binding; the sequence is TLWL. Disulfide bonds link C257–C331 and C332–C389. D289 is an active-site residue. Residues E294 and D309 each contribute to the ATP site. Mn(2+) is bound at residue D309.

It belongs to the FAM20 family. Requires Mn(2+) as cofactor. As to expression, widely expressed. Strongly expressed in pancreas, spleen and fetal liver.

Its subcellular location is the golgi apparatus membrane. The enzyme catalyses 3-O-(beta-D-galactosyl-(1-&gt;3)-beta-D-galactosyl-(1-&gt;4)-beta-D-xylosyl)-L-seryl-[protein] + ATP = 3-O-(beta-D-galactosyl-(1-&gt;3)-beta-D-galactosyl-(1-&gt;4)-beta-D-2-O-phosphoxylosyl)-L-seryl-[protein] + ADP + H(+). Its function is as follows. Responsible for the 2-O-phosphorylation of xylose in the glycosaminoglycan-protein linkage region of proteoglycans thereby regulating the amount of mature GAG chains. Sulfated glycosaminoglycans (GAGs), including heparan sulfate and chondroitin sulfate, are synthesized on the so-called common GAG-protein linkage region (GlcUAbeta1-3Galbeta1-3Galbeta1-4Xylbeta1-O-Ser) of core proteins, which is formed by the stepwise addition of monosaccharide residues by the respective specific glycosyltransferases. Xylose 2-O-phosphorylation may influence the catalytic activity of B3GAT3 (GlcAT-I) which completes the precursor tetrasaccharide of GAG-protein linkage regions on which the repeating disaccharide region is synthesized. In Homo sapiens (Human), this protein is Glycosaminoglycan xylosylkinase.